A 307-amino-acid chain; its full sequence is Dioxygenase swnH1 (307 aa).

Positions 149, 151, and 227 each coordinate Fe cation.

It belongs to the PhyH family. In terms of assembly, homodimer. It depends on Fe cation as a cofactor.

It functions in the pathway mycotoxin biosynthesis. Functionally, dioxygenase; part of the gene cluster that mediates the biosynthesis of swainsonine (SW), a cytotoxic fungal alkaloid and a potential cancer therapy drug. Swainsonine production occurs via a multibranched pathway and is dispensable for fungal colonization of plants and infection of insect hosts. The first step of swainsonine biosynthesis is the production of the precursor pipecolic acid (PA) via conversion of L-lysine (Lys) to 1-piperideine-6-carboxylate (P6C) by the aminotransferase swnA, the latter being further reduced to PA by the reductase swnR. The PKS-NRPS hybrid synthetase swnK uptakes and condensates PA and malonyl-CoA with and without skipping of the ketoreductase (KR) domain in order to produce 3 intermediates, 1-oxoindolizidine, (1S)-1-hydroxyindolizin, and (1R)-1-hydroxyindolizine; with the transisomer (1S)-1-hydroxyindolizin being predominant. The terminal thioester reductase (TE) domain of swnK is involved in reduction of the thioester bond to release the intermediate aldehydes. The oxidoreductase swnN could contribute to the reduction of 1-oxoindolizidine to (1S)-1-hydroxyindolizin and (1R)-1-hydroxyindolizine, contributing to the major route of SW production. The dioxygenase swnH2 would be responsible for the oxidization of (1R)-1-hydroxyindolizine into (1R,2S)-1,2-dihydroxyindolizine and of (1S)-1-hydroxyindolizin to yield both (1R,2S)-1,2-dihydroxyindolizine and (1S,2S)-1,2-dihydroxyindolizine. The dioxygenase swnH1 then performs the conversion of the 1,2-dihydroxyindolizine epimers to SW. This is Dioxygenase swnH1 from Arthroderma benhamiae (strain ATCC MYA-4681 / CBS 112371) (Trichophyton mentagrophytes).